Reading from the N-terminus, the 377-residue chain is Putative F-box protein At1g70380 (377 aa).

Residues 3–48 enclose the F-box domain; it reads NTSFETLALDMQIEILARLPLKYLMRCMCVSKKWASLIRGEDFRSA.

The chain is Putative F-box protein At1g70380 from Arabidopsis thaliana (Mouse-ear cress).